Reading from the N-terminus, the 644-residue chain is Leucine-rich repeat protein soc-2 homolog (644 aa).

Over residues Met1 to Gly19 the composition is skewed to low complexity. 2 disordered regions span residues Met1–Leu60 and Asn82–Asp150. Gly residues-rich tracts occupy residues Gly26–Ala50 and Gly87–Gly96. Over residues Gln99–Asn117 the composition is skewed to polar residues. 20 LRR repeats span residues Gly164–Cys185, His187–Leu208, Ser210–Cys231, Gln233–Leu254, Ser256–Leu277, Asn279–Leu300, Asn302–Cys323, Asn325–Leu346, Ser348–Lys370, Ser371–Ser392, Gly395–Gln416, Asn419–Arg440, Gly443–Trp464, Asn466–Leu487, Asn489–Leu510, Arg512–Leu533, Glu535–Leu556, Asn558–Leu579, Ser581–Cys603, and Asn605–Gly626.

Belongs to the SHOC2 family.

In terms of biological role, acts as a Ras effector and participates in MAPK pathway activation. Probably acts as a regulatory subunit of protein phosphatase that specifically dephosphorylates Raf kinase and stimulate Raf activity at specialized signaling complexes upon Ras activation. The sequence is that of Leucine-rich repeat protein soc-2 homolog (Sur-8) from Drosophila erecta (Fruit fly).